A 541-amino-acid polypeptide reads, in one-letter code: Neutral amino acid transporter B(0) (541 aa).

Residue M1 is modified to N-acetylmethionine. Over residues M1 to P10 the composition is skewed to basic and acidic residues. Positions M1 to S32 are disordered. The Cytoplasmic portion of the chain corresponds to M1–A52. A helical membrane pass occupies residues N53–L82. Residues G83–E95 are Extracellular-facing. Residues L96 to A117 form a helical membrane-spanning segment. Residues A118–W131 lie on the Cytoplasmic side of the membrane. The helical transmembrane segment at A132–L154 threads the bilayer. Topologically, residues Q155 to H225 are extracellular. N-linked (GlcNAc...) asparagine glycans are attached at residues N164 and N215. Residues E226–L249 traverse the membrane as a helical segment. Residues G250–R258 lie on the Cytoplasmic side of the membrane. The chain crosses the membrane as a helical span at residues F259–V286. Topologically, residues A287–I307 are extracellular. Residues L308 to F329 form a helical membrane-spanning segment. Over T330 to P334 the chain is Cytoplasmic. The segment at residues Y335 to V365 is an intramembrane region (discontinuously helical). The Cytoplasmic portion of the chain corresponds to E366–H374. The helical transmembrane segment at I375–F401 threads the bilayer. Residues G383, T385, and N387 each contribute to the Na(+) site. At I402–K414 the chain is on the extracellular side. The discontinuously helical intramembrane region spans I415–S448. The Extracellular portion of the chain corresponds to L449–D461. Residues W462 to L483 traverse the membrane as a helical segment. Na(+) is bound by residues N472 and D476. The Cytoplasmic portion of the chain corresponds to Q484–M541. Positions R493–M541 are disordered. Phosphoserine is present on residues S495, S504, and S539.

Belongs to the dicarboxylate/amino acid:cation symporter (DAACS) (TC 2.A.23) family. SLC1A5 subfamily. As to quaternary structure, homotrimer.

The protein localises to the cell membrane. It is found in the melanosome. It carries out the reaction L-glutamine(out) + L-serine(in) + Na(+)(out) = L-glutamine(in) + L-serine(out) + Na(+)(in). It catalyses the reaction L-glutamine(in) + L-serine(out) + Na(+)(out) = L-glutamine(out) + L-serine(in) + Na(+)(in). The enzyme catalyses L-threonine(in) + L-glutamine(out) + Na(+)(out) = L-threonine(out) + L-glutamine(in) + Na(+)(in). The catalysed reaction is L-threonine(out) + L-glutamine(in) + Na(+)(out) = L-threonine(in) + L-glutamine(out) + Na(+)(in). It carries out the reaction L-asparagine(in) + L-glutamine(out) + Na(+)(out) = L-asparagine(out) + L-glutamine(in) + Na(+)(in). It catalyses the reaction L-asparagine(out) + L-glutamine(in) + Na(+)(out) = L-asparagine(in) + L-glutamine(out) + Na(+)(in). The enzyme catalyses L-glutamine(in) + L-alanine(out) + Na(+)(out) = L-glutamine(out) + L-alanine(in) + Na(+)(in). The catalysed reaction is L-valine(out) + L-glutamine(in) + Na(+)(out) = L-valine(in) + L-glutamine(out) + Na(+)(in). It carries out the reaction L-glutamine(in) + L-methionine(out) + Na(+)(out) = L-glutamine(out) + L-methionine(in) + Na(+)(in). It catalyses the reaction L-glutamine(in) + L-glutamate(out) + Na(+)(out) + H(+)(out) = L-glutamine(out) + L-glutamate(in) + Na(+)(in) + H(+)(in). The enzyme catalyses D-serine(in) + L-glutamine(out) + Na(+)(out) = D-serine(out) + L-glutamine(in) + Na(+)(in). The catalysed reaction is D-serine(in) + L-alanine(out) + Na(+)(out) = D-serine(out) + L-alanine(in) + Na(+)(in). It carries out the reaction nitrate(in) = nitrate(out). It catalyses the reaction iodide(out) = iodide(in). The enzyme catalyses thiocyanate(in) = thiocyanate(out). Sodium-coupled antiporter of neutral amino acids. In a tri-substrate transport cycle, exchanges neutral amino acids between the extracellular and intracellular compartments, coupled to the inward cotransport of at least one sodium ion. The preferred substrate is the essential amino acid L-glutamine, a precursor for biosynthesis of proteins, nucleotides and amine sugars as well as an alternative fuel for mitochondrial oxidative phosphorylation. Exchanges L-glutamine with other neutral amino acids such as L-serine, L-threonine and L-asparagine in a bidirectional way. Provides L-glutamine to proliferating stem and activated cells driving the metabolic switch toward cell differentiation. The transport cycle is usually pH-independent, with the exception of L-glutamate. Transports extracellular L-glutamate coupled to the cotransport of one proton and one sodium ion in exchange for intracellular L-glutamine counter-ion. May provide for L-glutamate uptake in glial cells regulating glutamine/glutamate cycle in the nervous system. Can transport D-amino acids. Mediates D-serine release from the retinal glia potentially affecting NMDA receptor function in retinal neurons. Displays sodium- and amino acid-dependent but uncoupled channel-like anion conductance with a preference SCN(-) &gt;&gt; NO3(-) &gt; I(-) &gt; Cl(-). Through binding of the fusogenic protein syncytin-1/ERVW-1 may mediate trophoblasts syncytialization, the spontaneous fusion of their plasma membranes, an essential process in placental development. This Oryctolagus cuniculus (Rabbit) protein is Neutral amino acid transporter B(0) (SLC1A5).